Consider the following 223-residue polypeptide: SCMKAAPMKEASIRGQGSLAYPGLRAQGNLETLGGPNDATRGLTSLADTFEHVIEELLDEQQVIQPSKENKDADLYSTRVMLSSQVPLEPPLLFLLEEYKNYLDAANMSMRVRRHSDPARRGELSVCDSTSEWVTAAEKKTAVDMSGATVTVLEKVPVPKGQLKQYFYETKCSLKGYAKEGCRGIDKRYWNSQCRTTQSYVRALTMDNKKRVGWRFIRIDTSC.

The signal sequence occupies residues 1–5; it reads SCMKA. The propeptide occupies 6 to 114; sequence APMKEASIRG…AANMSMRVRR (109 aa). N-linked (GlcNAc...) asparagine glycosylation is present at asparagine 107. 2 disulfide bridges follow: cysteine 127–cysteine 194 and cysteine 172–cysteine 223.

The protein belongs to the NGF-beta family.

It localises to the secreted. Promotes the survival of neuronal populations that are all located either in the central nervous system or directly connected to it. This is Neurotrophic factor BDNF precursor form (BDNF) from Tropidophis haetianus (Haitian dwarf boa).